Reading from the N-terminus, the 546-residue chain is Chaperonin GroEL (546 aa).

ATP-binding positions include 30–33, lysine 51, 87–91, glycine 415, 479–481, and aspartate 495; these read TLGP, DGTTT, and NAA.

This sequence belongs to the chaperonin (HSP60) family. In terms of assembly, forms a cylinder of 14 subunits composed of two heptameric rings stacked back-to-back. Interacts with the co-chaperonin GroES.

It is found in the cytoplasm. It catalyses the reaction ATP + H2O + a folded polypeptide = ADP + phosphate + an unfolded polypeptide.. Functionally, together with its co-chaperonin GroES, plays an essential role in assisting protein folding. The GroEL-GroES system forms a nano-cage that allows encapsulation of the non-native substrate proteins and provides a physical environment optimized to promote and accelerate protein folding. The protein is Chaperonin GroEL of Xanthomonas axonopodis pv. citri (strain 306).